The primary structure comprises 423 residues: Glutamate-1-semialdehyde 2,1-aminomutase (423 aa).

N6-(pyridoxal phosphate)lysine is present on Lys-262.

It belongs to the class-III pyridoxal-phosphate-dependent aminotransferase family. HemL subfamily. Homodimer. Pyridoxal 5'-phosphate is required as a cofactor.

It is found in the cytoplasm. The enzyme catalyses (S)-4-amino-5-oxopentanoate = 5-aminolevulinate. It functions in the pathway porphyrin-containing compound metabolism; protoporphyrin-IX biosynthesis; 5-aminolevulinate from L-glutamyl-tRNA(Glu): step 2/2. In Campylobacter fetus subsp. fetus (strain 82-40), this protein is Glutamate-1-semialdehyde 2,1-aminomutase.